Consider the following 386-residue polypeptide: MNIHEYQAKEILHKFNVPVPKGFVATSAEGVETQINQLKSDVFVVKAQIHAGGRGKAGGVKLAKSVEEAQQFVKNMLGITLVTHQTGPSGQQVRRIYIEEGSSIKKEYYLSLVVDPKLSRLVFIFSSEGGMDIEEVAKNSPTKIVKFDIDPATGFTNLDNSKLANNFNLNSEQIERITNIAKNIYDAFITTDASQIEINPLVETNSGDFVALDAKINFDDNALYRHPEIVQLRDYDEEVKEEIEASKHGLSYIKMDGNIGCMVNGAGLAMATMDIIKYYGAEPANFLDVGGGASKETVTEAFKIILSDSNVKGILVNIFGGIMRCDIIASGIVAAAKEMSIKVPLVVRLSGTNFEEGKKILEESGLNIIAADELGDAAQKIVKEVK.

Residues K9–E244 form the ATP-grasp domain. ATP is bound by residues K46, G53 to G55, E99, S102, and E107. Mg(2+)-binding residues include N199 and D213. Residues N264 and G321 to M323 contribute to the substrate site.

It belongs to the succinate/malate CoA ligase beta subunit family. In terms of assembly, heterotetramer of two alpha and two beta subunits. Requires Mg(2+) as cofactor.

The catalysed reaction is succinate + ATP + CoA = succinyl-CoA + ADP + phosphate. It carries out the reaction GTP + succinate + CoA = succinyl-CoA + GDP + phosphate. It participates in carbohydrate metabolism; tricarboxylic acid cycle; succinate from succinyl-CoA (ligase route): step 1/1. In terms of biological role, succinyl-CoA synthetase functions in the citric acid cycle (TCA), coupling the hydrolysis of succinyl-CoA to the synthesis of either ATP or GTP and thus represents the only step of substrate-level phosphorylation in the TCA. The beta subunit provides nucleotide specificity of the enzyme and binds the substrate succinate, while the binding sites for coenzyme A and phosphate are found in the alpha subunit. The polypeptide is Succinate--CoA ligase [ADP-forming] subunit beta (Wolbachia pipientis subsp. Culex pipiens (strain wPip)).